The chain runs to 360 residues: MVAVRVLAAMSGGVDSAVAAARAVAAGHDVTGVHLALARNPQTYRTGARGCCTLEDSRDARRAADVIGIPFYVWDMAERFQADVVDDFVAEYAAGRTPNPCLRCNEKIKFAAVLDRAVALGFDAVVTGHHARLGADGLLRRSVDLAKDQSYVLGVLTREQLGRSMFPLGDSTKTQVRAEATGRGLTVADKPDSHDICFVADGDTRGFLAERLGATPGDVVDSSTGAVVGRHTGAYAYTVGQRRGLHLDRPAPDGRPRYVLSITPKTNTVTVGPAEALAVSQVRAQRPVWTGGPRPADPIECEVQLRAHGDVVPATVAVTGDGLRAELHRPVRGVAAGQAIVAYRPDPGGDVVLGSATIAA.

ATP-binding positions include 9-16 (AMSGGVDS) and L35. C104 (nucleophile) is an active-site residue. C104 and C197 form a disulfide bridge. Position 128 (G128) interacts with ATP. The interaction with tRNA stretch occupies residues 147-149 (KDQ). C197 functions as the Cysteine persulfide intermediate in the catalytic mechanism.

Belongs to the MnmA/TRMU family.

Its subcellular location is the cytoplasm. The catalysed reaction is S-sulfanyl-L-cysteinyl-[protein] + uridine(34) in tRNA + AH2 + ATP = 2-thiouridine(34) in tRNA + L-cysteinyl-[protein] + A + AMP + diphosphate + H(+). Its function is as follows. Catalyzes the 2-thiolation of uridine at the wobble position (U34) of tRNA, leading to the formation of s(2)U34. This chain is tRNA-specific 2-thiouridylase MnmA, found in Salinispora arenicola (strain CNS-205).